A 512-amino-acid chain; its full sequence is 2-isopropylmalate synthase (512 aa).

The region spanning 5-267 (VVIFDTTLRD…ETSINKSEIY (263 aa)) is the Pyruvate carboxyltransferase domain. Mn(2+) contacts are provided by Asp-14, His-202, His-204, and Asn-238. The interval 391–512 (SLEYLHITSG…LPKAKTERAV (122 aa)) is regulatory domain.

It belongs to the alpha-IPM synthase/homocitrate synthase family. LeuA type 1 subfamily. In terms of assembly, homodimer. The cofactor is Mn(2+).

It localises to the cytoplasm. The enzyme catalyses 3-methyl-2-oxobutanoate + acetyl-CoA + H2O = (2S)-2-isopropylmalate + CoA + H(+). It participates in amino-acid biosynthesis; L-leucine biosynthesis; L-leucine from 3-methyl-2-oxobutanoate: step 1/4. Functionally, catalyzes the condensation of the acetyl group of acetyl-CoA with 3-methyl-2-oxobutanoate (2-ketoisovalerate) to form 3-carboxy-3-hydroxy-4-methylpentanoate (2-isopropylmalate). This is 2-isopropylmalate synthase from Heliobacterium modesticaldum (strain ATCC 51547 / Ice1).